The sequence spans 518 residues: Serine--tRNA ligase, mitochondrial (518 aa).

A mitochondrion-targeting transit peptide spans 1-34 (MAASIVRRLGPLVAGRGLRLRGGCVCNQSFKRSF). Residue lysine 110 is modified to N6-acetyllysine. Lysine 195 carries the N6-succinyllysine modification. Residue 299–301 (TAE) coordinates L-serine. 330–332 (RAE) provides a ligand contact to ATP. Lysine 337 carries the post-translational modification N6-succinyllysine. Valine 345 is an ATP binding site. Glutamate 352 contributes to the L-serine binding site. 418–421 (EVTS) contacts ATP. Threonine 453 is an L-serine binding site. Residues 497 to 518 (PLQYIGPNQPQKPRLPGQPASS) are disordered.

Belongs to the class-II aminoacyl-tRNA synthetase family. Type-1 seryl-tRNA synthetase subfamily. As to quaternary structure, homodimer. The tRNA molecule probably binds across the dimer. In terms of processing, two N-termini starting at positions 35 and 37 have been identified by direct sequencing.

The protein resides in the mitochondrion matrix. It carries out the reaction tRNA(Ser) + L-serine + ATP = L-seryl-tRNA(Ser) + AMP + diphosphate + H(+). The catalysed reaction is tRNA(Sec) + L-serine + ATP = L-seryl-tRNA(Sec) + AMP + diphosphate + H(+). It functions in the pathway aminoacyl-tRNA biosynthesis; selenocysteinyl-tRNA(Sec) biosynthesis; L-seryl-tRNA(Sec) from L-serine and tRNA(Sec): step 1/1. Catalyzes the attachment of serine to tRNA(Ser). Is also probably able to aminoacylate tRNA(Sec) with serine, to form the misacylated tRNA L-seryl-tRNA(Sec), which will be further converted into selenocysteinyl-tRNA(Sec). In Bos taurus (Bovine), this protein is Serine--tRNA ligase, mitochondrial (SARS2).